The sequence spans 299 residues: Quinolinate synthase (299 aa).

Histidine 21 and serine 38 together coordinate iminosuccinate. Position 83 (cysteine 83) interacts with [4Fe-4S] cluster. Iminosuccinate-binding positions include 109-111 (YVN) and serine 126. [4Fe-4S] cluster is bound at residue cysteine 170. Iminosuccinate-binding positions include 196–198 (HPE) and threonine 213. Cysteine 256 is a binding site for [4Fe-4S] cluster.

This sequence belongs to the quinolinate synthase family. Type 2 subfamily. Requires [4Fe-4S] cluster as cofactor.

It localises to the cytoplasm. It catalyses the reaction iminosuccinate + dihydroxyacetone phosphate = quinolinate + phosphate + 2 H2O + H(+). Its pathway is cofactor biosynthesis; NAD(+) biosynthesis; quinolinate from iminoaspartate: step 1/1. Functionally, catalyzes the condensation of iminoaspartate with dihydroxyacetone phosphate to form quinolinate. The sequence is that of Quinolinate synthase from Pyrococcus abyssi (strain GE5 / Orsay).